Reading from the N-terminus, the 289-residue chain is 4-diphosphocytidyl-2-C-methyl-D-erythritol kinase (289 aa).

Lys10 is a catalytic residue. 94 to 104 is an ATP binding site; sequence PVAAGLAGGSS. The active site involves Asp136.

The protein belongs to the GHMP kinase family. IspE subfamily.

It carries out the reaction 4-CDP-2-C-methyl-D-erythritol + ATP = 4-CDP-2-C-methyl-D-erythritol 2-phosphate + ADP + H(+). Its pathway is isoprenoid biosynthesis; isopentenyl diphosphate biosynthesis via DXP pathway; isopentenyl diphosphate from 1-deoxy-D-xylulose 5-phosphate: step 3/6. Functionally, catalyzes the phosphorylation of the position 2 hydroxy group of 4-diphosphocytidyl-2C-methyl-D-erythritol. This is 4-diphosphocytidyl-2-C-methyl-D-erythritol kinase from Bacillus cytotoxicus (strain DSM 22905 / CIP 110041 / 391-98 / NVH 391-98).